The primary structure comprises 313 residues: Nucleotide-binding protein Swit_0399 (313 aa).

Position 20–27 (20–27 (GMSGSGKK)) interacts with ATP. GTP is bound at residue 73 to 76 (DSRT). A disordered region spans residues 289–313 (PTVRHRDLTRQKSNAEESTVPGVGS). Residues 292–303 (RHRDLTRQKSNA) are compositionally biased toward basic and acidic residues.

Belongs to the RapZ-like family.

Displays ATPase and GTPase activities. The protein is Nucleotide-binding protein Swit_0399 of Rhizorhabdus wittichii (strain DSM 6014 / CCUG 31198 / JCM 15750 / NBRC 105917 / EY 4224 / RW1) (Sphingomonas wittichii).